Reading from the N-terminus, the 300-residue chain is Dihydroorotate dehydrogenase B (NAD(+)), catalytic subunit (300 aa).

FMN is bound by residues Ser20 and 44 to 45 (KS). Residues Lys44, 68 to 72 (NAMGL), and Asn122 each bind substrate. Asn122 lines the FMN pocket. The active-site Nucleophile is Cys125. 2 residues coordinate FMN: Lys160 and Ile186. 187-188 (NT) is a binding site for substrate. FMN contacts are provided by residues Gly212, 238-239 (GG), and 260-261 (GT).

Belongs to the dihydroorotate dehydrogenase family. Type 1 subfamily. Heterotetramer of 2 PyrK and 2 PyrD type B subunits. It depends on FMN as a cofactor.

It is found in the cytoplasm. The enzyme catalyses (S)-dihydroorotate + NAD(+) = orotate + NADH + H(+). It participates in pyrimidine metabolism; UMP biosynthesis via de novo pathway; orotate from (S)-dihydroorotate (NAD(+) route): step 1/1. Catalyzes the conversion of dihydroorotate to orotate with NAD(+) as electron acceptor. The protein is Dihydroorotate dehydrogenase B (NAD(+)), catalytic subunit (pyrD) of Pyrococcus furiosus (strain ATCC 43587 / DSM 3638 / JCM 8422 / Vc1).